A 61-amino-acid polypeptide reads, in one-letter code: uncharacterized protein (61 aa).

This is an uncharacterized protein from Acidianus bottle-shaped virus (isolate Italy/Pozzuoli) (ABV).